The sequence spans 343 residues: General stress protein 30 (343 aa).

It belongs to the polysaccharide pyruvyl transferase family.

The chain is General stress protein 30 (yxaB) from Bacillus subtilis (strain 168).